A 316-amino-acid chain; its full sequence is MTDTFQHISVLLHESIDGLAIKPDGIYIDGTFGRGGHSRTILSKLGEHGRLYSIDRDPQAIAEAGKIDDPRFTIIHGPFSGMANYAEQYDLVGKVDGVLLDLGVSSPQLDDAERGFSFMKDGPLDMRMDPTSGIPVSQWLMEADLDDITWVIREFGEDKHARRIAKAIVAHREDETKEPLTRTSQLAKLISEAAPKSFKEKKHPATRAFQAFRIYINSELEEIDTALKGAASILAPEGRLSVISFHSLEDRMVKRFMRKESKGPEVPHGIPLTEAQIKALGSANMKTVGKAIMPTAQEIELNPRSRSSVLRIAEKL.

S-adenosyl-L-methionine is bound by residues 35 to 37 (GGH), D55, F79, D101, and Q108.

This sequence belongs to the methyltransferase superfamily. RsmH family.

The protein resides in the cytoplasm. It carries out the reaction cytidine(1402) in 16S rRNA + S-adenosyl-L-methionine = N(4)-methylcytidine(1402) in 16S rRNA + S-adenosyl-L-homocysteine + H(+). Its function is as follows. Specifically methylates the N4 position of cytidine in position 1402 (C1402) of 16S rRNA. In Vibrio vulnificus (strain CMCP6), this protein is Ribosomal RNA small subunit methyltransferase H.